Reading from the N-terminus, the 406-residue chain is Tyrosine-specific transport system 2 (406 aa).

The next 11 membrane-spanning stretches (helical) occupy residues 7–27 (FGSALIIAGTTIGAGMLAMPL), 38–58 (LLLLVGLWALLVYSGLLFVEV), 83–103 (IFATLSLLVLLYALSAAYITG), 119–139 (AMSLKTAIIIFTVVLGSFVVV), 150–170 (VLFIGKLIAFAFVLFMMLPKV), 183–203 (AFVVSAAPIFLTSFGFHVIMA), 219–239 (AILIGTAIPLAAYLVWQLATH), 279–299 (VFSSLALITSFLGVMLGVFEG), 314–334 (FVLTIAAFLPPLVFALFYPEG), 335–355 (FITALSYAGLLCAFYCLILPI), and 376–396 (NFALVLALLIGVVIMLIPFLI).

It belongs to the amino acid/polyamine transporter 2 family. Mtr/TnaB/TyrP permease subfamily.

Its subcellular location is the cell inner membrane. The catalysed reaction is L-tyrosine(in) + H(+)(in) = L-tyrosine(out) + H(+)(out). Functionally, transports tyrosine across the cytoplasmic membrane. The transport system is energized by the proton motive force. The protein is Tyrosine-specific transport system 2 (tyrP-B) of Haemophilus influenzae (strain ATCC 51907 / DSM 11121 / KW20 / Rd).